Here is a 713-residue protein sequence, read N- to C-terminus: Glycine--tRNA ligase beta subunit (713 aa).

Belongs to the class-II aminoacyl-tRNA synthetase family. In terms of assembly, tetramer of two alpha and two beta subunits.

It localises to the cytoplasm. It catalyses the reaction tRNA(Gly) + glycine + ATP = glycyl-tRNA(Gly) + AMP + diphosphate. In Picosynechococcus sp. (strain ATCC 27264 / PCC 7002 / PR-6) (Agmenellum quadruplicatum), this protein is Glycine--tRNA ligase beta subunit.